The following is a 330-amino-acid chain: MARGELMKKLLASYGRDEDFRAVAEQIIDEEEKKNNRVLARTLRKTLEAGPQRTQSAPKALAPLIPFPEAAADFVERIEPEHNRNDIVLSAANVRVLLGLVKEFRRADEIRQHGLKVRSKMLFCGPPGCGKTLCAEIFAAELGLPLFRVKLDRLISSYLGETATNIRKTFEFARKQPCVLFFDEFDALARTRDDSGEHNELRRVVNSLLLFIDNMQPKGFLIAATNLDRSLDAAIWRRFDEVLWFDRPEAAMIGRFLKLKFKNVPVAFDPARNSAALEGYSFAEIERVCTQAIKAMIIERRKQVQERDFNRALQDEARRRAGQARLAPMI.

An ATP-binding site is contributed by 125–132 (GPPGCGKT).

It belongs to the AAA ATPase family.

This is an uncharacterized protein from Sinorhizobium fredii (strain NBRC 101917 / NGR234).